A 228-amino-acid polypeptide reads, in one-letter code: Transmembrane protein 186 (228 aa).

Residues 1–93 are Mitochondrial matrix-facing; it reads MDMMMMSTRL…RGLRALSRLK (93 aa). The chain crosses the membrane as a helical span at residues 94–112; it reads LLQTGITVVLLPTVYYLHL. The Mitochondrial intermembrane segment spans residues 113 to 118; that stretch reads QGQASV. Residues 119-141 form a helical membrane-spanning segment; sequence LVLNRSIGIALFAGVMLYSISHF. The Mitochondrial matrix portion of the chain corresponds to 142-228; sequence VRRVVGMMYL…AFGKVFGSLS (87 aa).

Belongs to the TMEM186 family.

It localises to the mitochondrion inner membrane. Functionally, may be required for efficient assembly of the mitochondrial complex I. The chain is Transmembrane protein 186 from Danio rerio (Zebrafish).